Reading from the N-terminus, the 573-residue chain is Putative ferric-chelate reductase 1 (573 aa).

The helical transmembrane segment at 4-24 (VCKSPQRLLFVLVSCFGLVQS) threads the bilayer. The region spanning 15-181 (LVSCFGLVQS…GTTGTSTTPA (167 aa)) is the Reelin domain. The DOMON domain maps to 213-328 (GCYFVAVQAS…NEYYLMIAAG (116 aa)). N-linked (GlcNAc...) asparagine glycans are attached at residues Asn-286 and Asn-300. In terms of domain architecture, Cytochrome b561 spans 332 to 532 (QGNIQFHTNK…YILQDLNLRA (201 aa)). The chain crosses the membrane as a helical span at residues 369-389 (AHGCLMLISWMATGSIGMIIA). His-370 and His-411 together coordinate heme b. The next 2 helical transmembrane spans lie at 414–434 (LMTL…VSAG) and 441–461 (HPVL…VAAF). The heme b site is built by His-441 and His-477. The next 3 helical transmembrane spans lie at 479 to 499 (CNAF…LALF), 506 to 526 (GWML…YILQ), and 550 to 570 (ILLF…LVGI).

The protein belongs to the FRRS1 family. Heme b is required as a cofactor.

It is found in the membrane. Functionally, putative ferric-chelate reductases reduce Fe(3+) to Fe(2+) before its transport from the endosome to the cytoplasm. The chain is Putative ferric-chelate reductase 1 (frrs1) from Danio rerio (Zebrafish).